The primary structure comprises 500 residues: Small ribosomal subunit protein uS3m (500 aa).

This sequence belongs to the universal ribosomal protein uS3 family.

It localises to the mitochondrion. The sequence is that of Small ribosomal subunit protein uS3m (RPS3) from Prototheca wickerhamii.